The sequence spans 42 residues: Large ribosomal subunit protein bL36 (42 aa).

This sequence belongs to the bacterial ribosomal protein bL36 family.

The polypeptide is Large ribosomal subunit protein bL36 (Ehrlichia ruminantium (strain Gardel)).